Consider the following 396-residue polypeptide: MNFSCLGLSKICFLVSVIFCTFLLLFIPKTKTPWRPRTYPQPRPPPLFNATCGKQFALPGIEHAQQKLPTHTTDITHFEDPGNVEDWRAYILGRENPDEKHEGPTDNPGEHKSVLASSINSSKDALEFEDLFIAVKTTRKYHKTRLDLLLQTWISRAKQQTFIFTDGEDQDLRQRAGIQVINTNCSAMHTRQALCCKMAVEYDKFIESERKWFCHVDDDNYVNLFSLRHLLASFSHSQDVYLGRPSLDHPIEAIERVKSDGSASVRFWFATGGAGFCISRGLALKMSPWASMGNFITTAELVRLPDDCTIGYIIEGLLGVKMHHTPLFHSHLENLQRLPLQSVLKQVTLSYGGPDNKRNVVSVGGIFSLENDPTRFRTVHCLLYPDTHWCPPRKTR.

Topologically, residues methionine 1–leucine 6 are cytoplasmic. A helical; Signal-anchor for type II membrane protein transmembrane segment spans residues glycine 7–isoleucine 27. Topologically, residues proline 28–arginine 396 are lumenal. 2 N-linked (GlcNAc...) asparagine glycosylation sites follow: asparagine 49 and asparagine 120. A substrate-binding site is contributed by arginine 145. Asparagine 184 carries an N-linked (GlcNAc...) asparagine glycan. Disulfide bonds link cysteine 185–cysteine 196 and cysteine 214–cysteine 277. Aspartate 218 is a substrate binding site. Aspartate 219 serves as a coordination point for Mn(2+). Aspartate 307 is a catalytic residue. Histidine 331 is a Mn(2+) binding site. Cysteine 381 and cysteine 390 are joined by a disulfide.

The protein belongs to the glycosyltransferase 31 family. Mn(2+) serves as cofactor. Detected in the mesanchymal region of the developing limb. Expressed in mesoderm but not in ectoderm with no evident boundary of expression.

Its subcellular location is the golgi apparatus membrane. The enzyme catalyses 3-O-(alpha-L-fucosyl)-L-threonyl-[EGF-like domain protein] + UDP-N-acetyl-alpha-D-glucosamine = 3-O-(N-acetyl-beta-D-glucosaminyl-(1-&gt;3)-alpha-L-fucosyl)-L-threonyl-[EGF-like domain protein] + UDP + H(+). It catalyses the reaction 3-O-(alpha-L-fucosyl)-L-seryl-[EGF-like domain protein] + UDP-N-acetyl-alpha-D-glucosamine = 3-O-(N-acetyl-beta-D-glucosaminyl-(1-&gt;3)-alpha-L-fucosyl)-L-seryl-[EGF-like domain protein] + UDP + H(+). In terms of biological role, glycosyltransferase that initiates the elongation of O-linked fucose residues attached to EGF-like repeats in the extracellular domain of Notch molecules. Involved in forelimb development and in adult forelimb regeneration. The sequence is that of Beta-1,3-N-acetylglucosaminyltransferase radical fringe (RFNG) from Notophthalmus viridescens (Eastern newt).